The primary structure comprises 126 residues: Large ribosomal subunit protein bL12 (126 aa).

This sequence belongs to the bacterial ribosomal protein bL12 family. In terms of assembly, homodimer. Part of the ribosomal stalk of the 50S ribosomal subunit. Forms a multimeric L10(L12)X complex, where L10 forms an elongated spine to which 2 to 4 L12 dimers bind in a sequential fashion. Binds GTP-bound translation factors.

Functionally, forms part of the ribosomal stalk which helps the ribosome interact with GTP-bound translation factors. Is thus essential for accurate translation. The protein is Large ribosomal subunit protein bL12 of Citrifermentans bemidjiense (strain ATCC BAA-1014 / DSM 16622 / JCM 12645 / Bem) (Geobacter bemidjiensis).